A 735-amino-acid chain; its full sequence is Protein RETICULATA-RELATED 5, chloroplastic (735 aa).

Residues 1-75 (MKPTTNGGLL…TRRAILVAPP (75 aa)) constitute a chloroplast transit peptide. The next 2 membrane-spanning stretches (helical) occupy residues 519-539 (ASVVDFFTVWLPAPTLSFISY) and 582-602 (VIIGGLKLAGVGVVSSFAAVG). Over residues 714–726 (ASQSTVEYSTTEE) the composition is skewed to polar residues. Positions 714-735 (ASQSTVEYSTTEEASMDDLKNQ) are disordered.

Belongs to the RETICULATA family.

The protein resides in the plastid. It is found in the chloroplast membrane. In terms of biological role, may play a role in leaf development. This chain is Protein RETICULATA-RELATED 5, chloroplastic, found in Arabidopsis thaliana (Mouse-ear cress).